Reading from the N-terminus, the 218-residue chain is Riboflavin kinase (218 aa).

The N-terminal stretch at Met-1 to Leu-19 is a signal peptide. 2 residues coordinate Mg(2+): Thr-72 and Asn-74. Catalysis depends on Glu-155, which acts as the Nucleophile.

The protein belongs to the flavokinase family. Requires Zn(2+) as cofactor. The cofactor is Mg(2+).

Its subcellular location is the microsome. It localises to the mitochondrion inner membrane. It is found in the endoplasmic reticulum. It carries out the reaction riboflavin + ATP = FMN + ADP + H(+). The protein operates within cofactor biosynthesis; FMN biosynthesis; FMN from riboflavin (ATP route): step 1/1. Its function is as follows. Catalyzes the phosphorylation of riboflavin (vitamin B2) to form flavin mononucleotide (FMN) coenzyme. The protein is Riboflavin kinase (FMN1) of Saccharomyces cerevisiae (strain ATCC 204508 / S288c) (Baker's yeast).